The primary structure comprises 116 residues: Arsenate reductase (116 aa).

C11 functions as the Nucleophile; cysteine thioarsenate intermediate in the catalytic mechanism.

The protein belongs to the ArsC family.

The enzyme catalyses [glutaredoxin]-dithiol + arsenate + glutathione + H(+) = glutathionyl-S-S-[glutaredoxin] + arsenite + H2O. Its function is as follows. Involved in resistance to arsenate. Catalyzes the reduction of arsenate [As(V)] to arsenite [As(III)]. The chain is Arsenate reductase (arsC) from Haemophilus influenzae (strain ATCC 51907 / DSM 11121 / KW20 / Rd).